A 1116-amino-acid chain; its full sequence is uncharacterized protein (1116 aa).

Residues 3–20 (FFLTFLLFLFTLFSLFVY) form a helical membrane-spanning segment.

The protein localises to the membrane. This is an uncharacterized protein from Aquifex aeolicus (strain VF5).